Here is a 515-residue protein sequence, read N- to C-terminus: Signal transduction histidine-protein kinase/phosphatase MprB (515 aa).

Topologically, residues 1-24 (MTLPPPPSRLKPPRNTSSLSLRWR) are cytoplasmic. Residues 25–45 (VMLLAMSMVAMVVVLMSVAVY) traverse the membrane as a helical segment. The Extracellular segment spans residues 46–165 (AVVSRALYDD…TGQVLGRLGT (120 aa)). A helical transmembrane segment spans residues 166 to 186 (VLLIVGGVGVAVAAIAGGMVA). In terms of domain architecture, HAMP spans 187–239 (RAGLRPVGRLTQAAERVARTDDLRPIPVFGSDELARLTEAFNMMLRALTESRE). The Cytoplasmic segment spans residues 187-515 (RAGLRPVGRL…GKSRSASKEL (329 aa)). The Histidine kinase domain occupies 247-467 (DAGHELRTPL…SFYVMLPGRP (221 aa)). Residue His250 is modified to Phosphohistidine; by autocatalysis. Residues 468–515 (LTPGGNGTAPVPAAQFDPDMRSAGSRADRRVIKNTETNGKSRSASKEL) form a disordered region.

Mg(2+) is required as a cofactor. It depends on Mn(2+) as a cofactor. Post-translationally, autophosphorylated.

It is found in the cell membrane. It catalyses the reaction ATP + protein L-histidine = ADP + protein N-phospho-L-histidine.. Functionally, member of the two-component regulatory system MprB/MprA which contributes to maintaining a balance among several systems involved in stress resistance and is required for establishment and maintenance of persistent infection in the host. In response to environmental signals MprB acts both as a membrane-associated protein kinase that undergoes autophosphorylation and subsequently transfers the phosphate to MprA, and a protein phosphatase that dephosphorylates phospho-MprA. The protein is Signal transduction histidine-protein kinase/phosphatase MprB (mprB) of Mycobacterium sp. (strain KMS).